Consider the following 338-residue polypeptide: Replication factor C small subunit (338 aa).

53–60 (GPPGVGKT) provides a ligand contact to ATP.

This sequence belongs to the activator 1 small subunits family. RfcS subfamily. As to quaternary structure, heteromultimer composed of small subunits (RfcS) and large subunits (RfcL).

In terms of biological role, part of the RFC clamp loader complex which loads the PCNA sliding clamp onto DNA. The polypeptide is Replication factor C small subunit (Methanosarcina mazei (strain ATCC BAA-159 / DSM 3647 / Goe1 / Go1 / JCM 11833 / OCM 88) (Methanosarcina frisia)).